The following is a 1198-amino-acid chain: Phosphatidylinositol-3,5-bisphosphate 3-phosphatase MTMR3 (1198 aa).

Serine 8 bears the Phosphoserine mark. Residues 155–576 (EHVTSRFKNE…RNLMLWSAVY (422 aa)) form the Myotubularin phosphatase domain. A compositionally biased stretch (polar residues) spans 265–280 (SRSSGSKLSTRNTSRD). A disordered region spans residues 265-285 (SRSSGSKLSTRNTSRDFPNGG). A 1,2-diacyl-sn-glycero-3-phospho-(1D-myo-inositol-3,5-bisphosphate)-binding residues include asparagine 326, asparagine 351, and isoleucine 352. 3 residues coordinate a 1,2-diacyl-sn-glycero-3-phospho-(1D-myo-inositol-3-phosphate): asparagine 326, asparagine 351, and isoleucine 352. Cysteine 413 serves as the catalytic Phosphocysteine intermediate. Positions 414, 415, 416, 417, 418, 419, 455, and 459 each coordinate a 1,2-diacyl-sn-glycero-3-phospho-(1D-myo-inositol-3,5-bisphosphate). 6 residues coordinate a 1,2-diacyl-sn-glycero-3-phospho-(1D-myo-inositol-3-phosphate): serine 414, aspartate 415, glycine 416, tryptophan 417, aspartate 418, and arginine 419. Arginine 459 is a binding site for a 1,2-diacyl-sn-glycero-3-phospho-(1D-myo-inositol-3-phosphate). A disordered region spans residues 590 to 612 (CAPYPAPGTSPDDPPLSRLPKTR). Positions 593–603 (YPAPGTSPDDP) are enriched in pro residues. Phosphoserine occurs at positions 613, 633, 647, and 651. Disordered stretches follow at residues 650–669 (LSSL…LGKP), 716–735 (EGKE…PEAS), and 855–891 (KSVS…SLVE). A compositionally biased stretch (basic and acidic residues) spans 716–732 (EGKEDPLLEKESRRKTP). Position 731 is a phosphothreonine (threonine 731). 2 positions are modified to phosphoserine: serine 906 and serine 909. Disordered regions lie at residues 933 to 974 (ETEN…SRQL) and 993 to 1019 (WLHS…DDDG). Positions 999–1010 (GRPSATSSPDQP) are enriched in polar residues. Residues 1029 to 1062 (QRLRQIESGHQQEVETLKKQVQELKSRLESQYLT) adopt a coiled-coil conformation. Residue serine 1064 is modified to Phosphoserine. The FYVE-type zinc finger occupies 1119–1179 (DHLAAHCYAC…VCKSCYSSLH (61 aa)). Positions 1125, 1128, 1141, 1144, 1149, 1152, 1171, and 1174 each coordinate Zn(2+).

This sequence belongs to the protein-tyrosine phosphatase family. Non-receptor class myotubularin subfamily. As to quaternary structure, forms heterodimers with MTMR4 that recruit both CEP55 and PLK1; occurs during early mitosis, regulates the phosphorylation of CEP55 by PLK1 and its recruitment to the midbody where it mediates cell abscission. Post-translationally, phosphorylated by CDK1 during mitosis.

The protein localises to the cytoplasm. Its subcellular location is the cytosol. It is found in the membrane. It carries out the reaction a 1,2-diacyl-sn-glycero-3-phospho-(1D-myo-inositol-3,5-bisphosphate) + H2O = a 1,2-diacyl-sn-glycero-3-phospho-(1D-myo-inositol-5-phosphate) + phosphate. The enzyme catalyses a 1,2-diacyl-sn-glycero-3-phospho-(1D-myo-inositol-3-phosphate) + H2O = a 1,2-diacyl-sn-glycero-3-phospho-(1D-myo-inositol) + phosphate. The catalysed reaction is 1,2-dihexadecanoyl-sn-glycero-3-phospho-(1D-myo-inositol-3-phosphate) + H2O = 1,2-dihexadecanoyl-sn-glycero-3-phospho-(1D-myo-inositol) + phosphate. It catalyses the reaction 1,2-dioctanoyl-sn-glycero-3-phospho-(1-D-myo-inositol-3-phosphate) + H2O = 1,2-dioctanoyl-sn-glycero-3-phospho-(1D-myo-inositol) + phosphate. It carries out the reaction 1,2-dihexadecanoyl-sn-glycero-3-phospho-(1D-myo-inositol-3,5-phosphate) + H2O = 1,2-dihexadecanoyl-sn-glycero-3-phospho-(1D-myo-inositol-5-phosphate) + phosphate. Lipid phosphatase that specifically dephosphorylates the D-3 position of phosphatidylinositol 3-phosphate and phosphatidylinositol 3,5-bisphosphate, generating phosphatidylinositol and phosphatidylinositol 5-phosphate. Decreases the levels of phosphatidylinositol 3-phosphate, a phospholipid found in cell membranes where it acts as key regulator of both cell signaling and intracellular membrane traffic. Could also have a molecular sequestering/adapter activity and regulate biological processes independently of its phosphatase activity. It includes the regulation of midbody abscission during mitotic cytokinesis. The polypeptide is Phosphatidylinositol-3,5-bisphosphate 3-phosphatase MTMR3 (Homo sapiens (Human)).